An 81-amino-acid chain; its full sequence is Large ribosomal subunit protein bL31B (81 aa).

It belongs to the bacterial ribosomal protein bL31 family. Type B subfamily. As to quaternary structure, part of the 50S ribosomal subunit.

This chain is Large ribosomal subunit protein bL31B, found in Bacillus anthracis (strain A0248).